A 101-amino-acid chain; its full sequence is Small ribosomal subunit protein bS18c (101 aa).

Belongs to the bacterial ribosomal protein bS18 family. As to quaternary structure, part of the 30S ribosomal subunit.

Its subcellular location is the plastid. It localises to the chloroplast. This is Small ribosomal subunit protein bS18c from Solanum bulbocastanum (Wild potato).